Consider the following 221-residue polypeptide: Ependymin-2 (221 aa).

An N-terminal signal peptide occupies residues 1–21 (MQDFAFAALSIWLCLGATALA). Residues N33, N73, and N97 are each glycosylated (N-linked (GlcNAc...) asparagine).

It belongs to the ependymin family. Post-translationally, binds calcium through the terminal sialic acids. In terms of tissue distribution, EPDs are synthesized in the meninx and secreted in the cerebrospinal fluid.

The protein localises to the secreted. May play a role in neural plasticity. May be involved during axon regeneration. This Salmo salar (Atlantic salmon) protein is Ependymin-2 (epd2).